The following is a 467-amino-acid chain: GTPase Obg (467 aa).

One can recognise an Obg domain in the interval 1–158; it reads MFYDEAKIFV…RWLRLELKLL (158 aa). The OBG-type G domain maps to 159–333; it reads ADVGLVGLPN…LIRATWERLQ (175 aa). GTP contacts are provided by residues 165 to 172, 190 to 194, 214 to 217, 285 to 288, and 314 to 316; these read GLPNAGKS, FTTLE, DLPG, NKMD, and SAA. Residues Ser-172 and Thr-192 each coordinate Mg(2+). One can recognise an OCT domain in the interval 352–430; sequence TLDRSQERWE…VAGRELVWEP (79 aa).

This sequence belongs to the TRAFAC class OBG-HflX-like GTPase superfamily. OBG GTPase family. As to quaternary structure, monomer. It depends on Mg(2+) as a cofactor.

The protein resides in the cytoplasm. An essential GTPase which binds GTP, GDP and possibly (p)ppGpp with moderate affinity, with high nucleotide exchange rates and a fairly low GTP hydrolysis rate. Plays a role in control of the cell cycle, stress response, ribosome biogenesis and in those bacteria that undergo differentiation, in morphogenesis control. The polypeptide is GTPase Obg (Thermomicrobium roseum (strain ATCC 27502 / DSM 5159 / P-2)).